Here is a 1126-residue protein sequence, read N- to C-terminus: Ubiquitin carboxyl-terminal hydrolase 16/45 (1126 aa).

Residues 1–15 (MVKKRQADSRDHDCS) are compositionally biased toward basic and acidic residues. Residues 1 to 44 (MVKKRQADSRDHDCSTDSGNEDLHHRKGLGSPGQSDGATPTTAS) form a disordered region. The segment covering 32 to 44 (PGQSDGATPTTAS) has biased composition (polar residues). A UBP-type zinc finger spans residues 43 to 181 (ASCQHIKKAV…ELVKKLAQKP (139 aa)). Zn(2+) contacts are provided by Cys-45, His-47, Cys-70, Cys-73, Cys-111, Cys-114, Cys-119, His-126, His-130, His-139, Cys-152, and Cys-155. 2 stretches are compositionally biased toward low complexity: residues 215 to 229 (GGSF…SLAA) and 254 to 264 (SSGLSTSDSLT). A disordered region spans residues 215 to 264 (GGSFDDSSSRGSLAAAGGGGGVGSSRNRQVAIPMPPPEPSSGLSTSDSLT). Cys-315 (nucleophile) is an active-site residue. Disordered regions lie at residues 513–547 (KPQP…INTK), 570–762 (ASLG…SGSS), and 795–833 (EQGA…ARTK). Residues 524 to 539 (PELSLTSSSSSVTPST) show a composition bias toward low complexity. The span at 586–598 (QRKAKRAAKKRQK) shows a compositional bias: basic residues. Low complexity-rich tracts occupy residues 599–614 (SSLN…GNEL) and 646–657 (TEDSTTSSVTTS). Polar residues predominate over residues 674-701 (APSTNNVPSSTASLTAPSKTYMDSNGNA). Positions 705 to 718 (GEKRDDTPEHMDKD) are enriched in basic and acidic residues. Low complexity predominate over residues 730–762 (ATSPAPTATNSSTSTSATGNNNSVAGSGLSGSS). The segment covering 807–816 (GEAKAIEQPE) has biased composition (basic and acidic residues). Residues 821-830 (QAQAMAQAQA) show a composition bias toward low complexity. His-984 functions as the Proton acceptor in the catalytic mechanism. Positions 1037-1089 (LKVLDDSDDFSNSSSNSSTSDESQTPATPLEEQQTQQAQQPQQPQQLEEAANV) are disordered. The span at 1046–1086 (FSNSSSNSSTSDESQTPATPLEEQQTQQAQQPQQPQQLEEA) shows a compositional bias: low complexity.

It belongs to the peptidase C19 family.

The enzyme catalyses Thiol-dependent hydrolysis of ester, thioester, amide, peptide and isopeptide bonds formed by the C-terminal Gly of ubiquitin (a 76-residue protein attached to proteins as an intracellular targeting signal).. Functionally, involved in the regulation of DNA damage repair. The sequence is that of Ubiquitin carboxyl-terminal hydrolase 16/45 from Drosophila melanogaster (Fruit fly).